Here is a 34-residue protein sequence, read N- to C-terminus: MSDIN-like toxin proprotein 2 (34 aa).

Positions 1–10 (MSDINTARLP) are excised as a propeptide. The segment at residues 11-20 (FYQFPDFKYP) is a cross-link (cyclopeptide (Phe-Pro)). The propeptide occupies 21–34 (CVGDDIEMVLARGE).

Belongs to the MSDIN fungal toxin family. Processed by the macrocyclase-peptidase enzyme POPB to yield a toxic cyclic decapeptide. POPB first removes 10 residues from the N-terminus. Conformational trapping of the remaining peptide forces the enzyme to release this intermediate rather than proceed to macrocyclization. The enzyme rebinds the remaining peptide in a different conformation and catalyzes macrocyclization of the N-terminal 10 residues.

In terms of biological role, probable toxin that belongs to the MSDIN-like toxin family responsible for a large number of food poisoning cases and deaths. The sequence is that of MSDIN-like toxin proprotein 2 from Amanita bisporigera (Destroying angel).